A 331-amino-acid polypeptide reads, in one-letter code: MARMYYDSDANLDILNDKTIAIIGYGSQGHAHALNLKDSGSKVIVGLYSGSKSATKAKDAGLDVYPVDEAAEKADLIMILLPDEVQKTVYKNQIEPHLKEGKILAFAHGFNIHFGQIIPPENVDVVMVAPKGPGHLVRRTYEQGEGVPCLFAIFQDASGQGRDRAMAYAKGIGGTRAGILETTFREETETDLFGEQVVLCGGLSALIKAGFETLVKAGYQPELAYFECLHEVKLIVDLVVEGGLANMRDSISNTAEFGDYTRGPRIVTDETRAQMQKILSEIQSGQFAREFVMENQTGKPVFTAMRRQEAEHSIEEVGKDLRAMFSWLKKR.

Positions 2–182 constitute a KARI N-terminal Rossmann domain; it reads ARMYYDSDAN…GGTRAGILET (181 aa). NADP(+) contacts are provided by residues 25–28, serine 51, serine 53, and 83–86; these read YGSQ and DEVQ. The active site involves histidine 108. Position 134 (glycine 134) interacts with NADP(+). One can recognise a KARI C-terminal knotted domain in the interval 183 to 328; sequence TFREETETDL…KDLRAMFSWL (146 aa). Mg(2+) contacts are provided by aspartate 191, glutamate 195, glutamate 227, and glutamate 231. Serine 252 provides a ligand contact to substrate.

The protein belongs to the ketol-acid reductoisomerase family. Mg(2+) serves as cofactor.

It carries out the reaction (2R)-2,3-dihydroxy-3-methylbutanoate + NADP(+) = (2S)-2-acetolactate + NADPH + H(+). It catalyses the reaction (2R,3R)-2,3-dihydroxy-3-methylpentanoate + NADP(+) = (S)-2-ethyl-2-hydroxy-3-oxobutanoate + NADPH + H(+). It functions in the pathway amino-acid biosynthesis; L-isoleucine biosynthesis; L-isoleucine from 2-oxobutanoate: step 2/4. It participates in amino-acid biosynthesis; L-valine biosynthesis; L-valine from pyruvate: step 2/4. Its function is as follows. Involved in the biosynthesis of branched-chain amino acids (BCAA). Catalyzes an alkyl-migration followed by a ketol-acid reduction of (S)-2-acetolactate (S2AL) to yield (R)-2,3-dihydroxy-isovalerate. In the isomerase reaction, S2AL is rearranged via a Mg-dependent methyl migration to produce 3-hydroxy-3-methyl-2-ketobutyrate (HMKB). In the reductase reaction, this 2-ketoacid undergoes a metal-dependent reduction by NADPH to yield (R)-2,3-dihydroxy-isovalerate. The protein is Ketol-acid reductoisomerase (NADP(+)) of Trichodesmium erythraeum (strain IMS101).